We begin with the raw amino-acid sequence, 657 residues long: Pentatricopeptide repeat-containing protein At1g11710, mitochondrial (657 aa).

The transit peptide at 1-74 directs the protein to the mitochondrion; the sequence is MFGHVFSRRT…REFRSSPKLA (74 aa). PPR repeat units follow at residues 147–181, 182–216, 217–251, 252–282, 290–324, 325–359, 360–394, 395–429, 430–464, 465–499, 500–530, 531–565, 568–602, and 603–637; these read SPDV…GFCV, SVHA…GYVE, NVNT…GVWP, NVVS…MGMM, NAVT…GVDC, NERT…GLVV, NTVI…NMQI, DRFT…KLVE, DIVC…GLSL, DAIS…NKTS, NLVI…MEIK, DIVT…DGEK, SLVT…GVVP, and DSIT…GVTP.

It belongs to the PPR family. P subfamily.

Its subcellular location is the mitochondrion. In Arabidopsis thaliana (Mouse-ear cress), this protein is Pentatricopeptide repeat-containing protein At1g11710, mitochondrial.